A 444-amino-acid chain; its full sequence is N-succinylarginine dihydrolase (444 aa).

Residues 19 to 28, Asn110, and 137 to 138 each bind substrate; these read SGLSVGNIAS and HR. Glu174 is a catalytic residue. Position 214 (Arg214) interacts with substrate. The active site involves His250. Substrate-binding residues include Asp252 and Asn362. Cys368 serves as the catalytic Nucleophile.

This sequence belongs to the succinylarginine dihydrolase family. Homodimer.

It catalyses the reaction N(2)-succinyl-L-arginine + 2 H2O + 2 H(+) = N(2)-succinyl-L-ornithine + 2 NH4(+) + CO2. The protein operates within amino-acid degradation; L-arginine degradation via AST pathway; L-glutamate and succinate from L-arginine: step 2/5. Functionally, catalyzes the hydrolysis of N(2)-succinylarginine into N(2)-succinylornithine, ammonia and CO(2). In Aliivibrio fischeri (strain MJ11) (Vibrio fischeri), this protein is N-succinylarginine dihydrolase.